Here is a 295-residue protein sequence, read N- to C-terminus: Probable cell division protein WhiA (295 aa).

The H-T-H motif DNA-binding region spans 262–293 (SLRELGKKLNLTKSQIYSKLKRIIKIAERFGD).

It belongs to the WhiA family.

Involved in cell division and chromosome segregation. The polypeptide is Probable cell division protein WhiA (Thermotoga maritima (strain ATCC 43589 / DSM 3109 / JCM 10099 / NBRC 100826 / MSB8)).